The following is a 134-amino-acid chain: MWSDPIADMLTRIRNANMVFKEYTDIPASNLKRKICEILKREGFIADYKYIEDGKQGILRVYLKYKGGRKNRERVIHGIVRVSHAGRRVYVDKDHIPKVKNGLGIAILTTSKGVLTDKEARQLGVGGEVIAYVW.

This sequence belongs to the universal ribosomal protein uS8 family. Part of the 30S ribosomal subunit. Contacts proteins S5 and S12.

One of the primary rRNA binding proteins, it binds directly to 16S rRNA central domain where it helps coordinate assembly of the platform of the 30S subunit. In Thermotoga neapolitana (strain ATCC 49049 / DSM 4359 / NBRC 107923 / NS-E), this protein is Small ribosomal subunit protein uS8.